Reading from the N-terminus, the 190-residue chain is Thymidylate kinase (190 aa).

Residue 7-14 (GVDTCGKS) coordinates ATP.

The protein belongs to the thymidylate kinase family.

It catalyses the reaction dTMP + ATP = dTDP + ADP. In terms of biological role, phosphorylation of dTMP to form dTDP in both de novo and salvage pathways of dTTP synthesis. This is Thymidylate kinase from Wolinella succinogenes (strain ATCC 29543 / DSM 1740 / CCUG 13145 / JCM 31913 / LMG 7466 / NCTC 11488 / FDC 602W) (Vibrio succinogenes).